We begin with the raw amino-acid sequence, 110 residues long: U1-lycotoxin-Ls1gg (110 aa).

A signal peptide spans 1–20; that stretch reads MKFVLLFGVLLVTLFSYSSA. A propeptide spanning residues 21–44 is cleaved from the precursor; sequence EMLDDFDQADEDELLSLIEKEEAR. 3 cysteine pairs are disulfide-bonded: C54–C71, C61–C89, and C73–C87.

It belongs to the neurotoxin 19 (CSTX) family. 03 subfamily. In terms of tissue distribution, expressed by the venom gland.

It is found in the secreted. This chain is U1-lycotoxin-Ls1gg, found in Lycosa singoriensis (Wolf spider).